Reading from the N-terminus, the 542-residue chain is Cytochrome P450 monooxygenase TRI1 (542 aa).

Residues 37-54 (LIYFLCFVVLGRAVQWFL) traverse the membrane as a helical segment. N-linked (GlcNAc...) asparagine glycans are attached at residues N167, N297, and N428. C469 provides a ligand contact to heme.

The protein belongs to the cytochrome P450 family. Heme serves as cofactor.

Its subcellular location is the membrane. It functions in the pathway sesquiterpene biosynthesis; trichothecene biosynthesis. In terms of biological role, cytochrome P450 monooxygenase; part of 2-gene cluster involved in trichothecene C-8 modification that mediates the biosynthesis of T2-toxin. The biosynthesis of trichothecenes begins with the cyclization of farnesyl diphosphate to trichodiene and is catalyzed by the trichodiene synthase TRI5. Trichodiene undergoes a series of oxygenations catalyzed by the cytochrome P450 monooxygenase TRI4. TRI4 controls the addition of four oxygens at C-2, C-3, C-11, and the C-12, C-13-epoxide to form the intermediate isotrichotriol. Isotrichotriol then undergoes a non-enzymatic isomerization and cyclization to form isotrichodermol. During this process, the oxygen at the C-2 position becomes the pyran ring oxygen and the hydroxyl group at C-11 is lost. More complex type A trichothecenes are built by modifying isotrichodermol through a series of paired hydroxylation and acetylation or acylation steps. Isotrichodermol is converted to isotrichodermin by the acetyltransferase TRI101. TRI101 encodes a C-3 transacetylase that acts as a self-protection or resistance factor during biosynthesis and that the presence of a free C-3 hydroxyl group is a key component of Fusarium trichothecene phytotoxicity. A second hydroxyl group is added to C-15 by the trichothecene C-15 hydroxylase TRI11, producing 15-decalonectrin, which is then acetylated by TRI3, producing calonectrin. A third hydroxyl group is added at C-4 by the cytochrome P450 monooxygenase TRI13, converting calonectrin to 3,15-diacetoxyspirpenol, which is subsequently acetylated by the acetyltransferase TRI7. A fourth hydroxyl group is added to C-8 by the cytochrome P450 monooxygenase TRI1, followed by the addition of an isovaleryl moiety by TRI16. Finally, the acetyl group is removed from the C-3 position by the trichothecene C-3 esterase TRI8 to produce T-2 toxin. This Fusarium sporotrichioides protein is Cytochrome P450 monooxygenase TRI1.